The chain runs to 255 residues: tRNA pseudouridine synthase A (255 aa).

The active-site Nucleophile is aspartate 52. Tyrosine 111 is a substrate binding site.

Belongs to the tRNA pseudouridine synthase TruA family. As to quaternary structure, homodimer.

The enzyme catalyses uridine(38/39/40) in tRNA = pseudouridine(38/39/40) in tRNA. Its function is as follows. Formation of pseudouridine at positions 38, 39 and 40 in the anticodon stem and loop of transfer RNAs. This chain is tRNA pseudouridine synthase A, found in Cereibacter sphaeroides (strain ATCC 17023 / DSM 158 / JCM 6121 / CCUG 31486 / LMG 2827 / NBRC 12203 / NCIMB 8253 / ATH 2.4.1.) (Rhodobacter sphaeroides).